Consider the following 109-residue polypeptide: Nucleoid-associated protein ASA_2087 (109 aa).

Disordered regions lie at residues 1–23 (MFGK…RMQK) and 87–109 (QSKS…KLPF). Residues 11–23 (MKQAQQMQERMQK) are compositionally biased toward low complexity.

Belongs to the YbaB/EbfC family. As to quaternary structure, homodimer.

It is found in the cytoplasm. The protein localises to the nucleoid. Functionally, binds to DNA and alters its conformation. May be involved in regulation of gene expression, nucleoid organization and DNA protection. The polypeptide is Nucleoid-associated protein ASA_2087 (Aeromonas salmonicida (strain A449)).